The sequence spans 137 residues: Cellular retinoic acid-binding protein 1 (137 aa).

The short motif at 21–31 (KALGVNAMLRK) is the Nuclear localization signal element. 132 to 134 (RIY) lines the all-trans-retinoate pocket.

Belongs to the calycin superfamily. Fatty-acid binding protein (FABP) family.

The protein localises to the cytoplasm. Cytosolic CRABPs may regulate the access of retinoic acid to the nuclear retinoic acid receptors. This is Cellular retinoic acid-binding protein 1 (CRABP1) from Gallus gallus (Chicken).